Reading from the N-terminus, the 323-residue chain is Aldo-keto reductase family 1 member C1 (323 aa).

NADP(+) is bound by residues 20-24 and D50; that span reads GFGTY. Y24 is a substrate binding site. The Proton donor role is filled by Y55. A substrate-binding site is contributed by H117. Residues 166-167, Q190, and 216-222 each bind NADP(+); these read SN and YSALGSH. Residues H222 and W227 each coordinate substrate. Position 270–280 (270–280) interacts with NADP(+); it reads KSYNEQRIRQN.

This sequence belongs to the aldo/keto reductase family. As to quaternary structure, monomer.

The protein localises to the cytoplasm. Its subcellular location is the cytosol. It carries out the reaction a 3alpha-hydroxysteroid + NADP(+) = a 3-oxosteroid + NADPH + H(+). It catalyses the reaction a 3alpha-hydroxysteroid + NAD(+) = a 3-oxosteroid + NADH + H(+). The catalysed reaction is (17R,20S)-17,20-dihydroxypregn-4-en-3-one + NADP(+) = 17alpha-hydroxyprogesterone + NADPH + H(+). The enzyme catalyses (17R,20S)-17,20-dihydroxypregn-4-en-3-one + NAD(+) = 17alpha-hydroxyprogesterone + NADH + H(+). It carries out the reaction (20S)-hydroxypregn-4-en-3-one + NADP(+) = progesterone + NADPH + H(+). It catalyses the reaction (20S)-hydroxypregn-4-en-3-one + NAD(+) = progesterone + NADH + H(+). The catalysed reaction is (1R,2R)-1,2-dihydrobenzene-1,2-diol + NADP(+) = catechol + NADPH + H(+). The enzyme catalyses (S)-indan-1-ol + NAD(+) = indan-1-one + NADH + H(+). It carries out the reaction (S)-indan-1-ol + NADP(+) = indan-1-one + NADPH + H(+). It catalyses the reaction 5alpha-androstane-3alpha,17beta-diol + NADP(+) = 17beta-hydroxy-5alpha-androstan-3-one + NADPH + H(+). The catalysed reaction is 5alpha-androstane-3beta,17beta-diol + NADP(+) = 17beta-hydroxy-5alpha-androstan-3-one + NADPH + H(+). The enzyme catalyses 5alpha-androstane-3alpha,17beta-diol + NAD(+) = 17beta-hydroxy-5alpha-androstan-3-one + NADH + H(+). It carries out the reaction 17beta-hydroxy-5alpha-androstan-3-one + NADP(+) = 5alpha-androstan-3,17-dione + NADPH + H(+). It catalyses the reaction androsterone + NADP(+) = 5alpha-androstan-3,17-dione + NADPH + H(+). The catalysed reaction is androsterone + NADPH + H(+) = 5alpha-androstane-3alpha,17beta-diol + NADP(+). The enzyme catalyses 5alpha-androstane-3alpha,17beta-diol + NAD(+) = androsterone + NADH + H(+). It carries out the reaction 17beta-estradiol + NADP(+) = estrone + NADPH + H(+). It catalyses the reaction 17beta-estradiol + NAD(+) = estrone + NADH + H(+). The catalysed reaction is testosterone + NADP(+) = androst-4-ene-3,17-dione + NADPH + H(+). The enzyme catalyses 20alpha-hydroxy-5beta-pregnan-3-one + NADP(+) = 5beta-pregnan-3,20-dione + NADPH + H(+). It carries out the reaction 3beta-hydroxy-5beta-pregnane-20-one + NADP(+) = 5beta-pregnan-3,20-dione + NADPH + H(+). It catalyses the reaction 3beta-hydroxy-5beta-pregnane-20-one + NADPH + H(+) = 3beta,20alpha-dihydroxy-5beta-pregnane + NADP(+). The catalysed reaction is (3beta,5alpha,17beta)-3-hydroxyandrostan-17-yl sulfate + NADP(+) = 5alpha-dihydrotestosterone sulfate + NADPH + H(+). Its pathway is steroid metabolism. Its function is as follows. Cytosolic aldo-keto reductase that catalyzes the NADH and NADPH-dependent reduction of ketosteroids to hydroxysteroids. Most probably acts as a reductase in vivo since the oxidase activity measured in vitro is inhibited by physiological concentrations of NADPH. Displays a broad positional specificity acting on positions 3, 17 and 20 of steroids and regulates the metabolism of hormones like estrogens and androgens. May also reduce conjugated steroids such as 5alpha-dihydrotestosterone sulfate. Displays affinity for bile acids. The polypeptide is Aldo-keto reductase family 1 member C1 (AKR1C1) (Pongo abelii (Sumatran orangutan)).